The following is a 569-amino-acid chain: MKKISRKEYVSMYGPTTGDKVRLGDTDLIAEVEHDYTIYGEELKFGGGKTLREGMSQSNNPSKEELDLIITNALIVDYTGIYKADIGIKDGKIAGIGKGGNKDMQDGVKNNLSVGPATEALAGEGLIVTAGGIDTHIHFISPQQIPTAFASGVTTMIGGGTGPADGTNATTITPGRRNLKWMLRAAEEYSMNLGFLAKGNASNDASLADQIEAGAIGFKIHEDWGTTPSAINHALDVADKYDVQVAIHTDTLNEAGCVEDTMAAIAGRTMHTFHTEGAGGGHAPDIIKVAGEHNILPASTNPTIPFTVNTEAEHMDMLMVCHHLDKSIKEDVQFADSRIRPQTIAAEDTLHDMGIFSITSSDSQAMGRVGEVITRTWQTADKNKKEFGRLKEEKGDNDNFRIKRYLSKYTINPAIAHGISEYVGSVEVGKVADLVLWSPAFFGVKPNMIIKGGFIALSQMGDANASIPTPQPVYYREMFAHHGKAKYDANITFVSQAAYDKGIKEELGLERQVLPVKNCRNITKKDMQFNDTTAHIEVNPETYHVFVDGKEVTSKPANKVSLAQLFSIF.

The Urease domain occupies 131–569 (GGIDTHIHFI…VSLAQLFSIF (439 aa)). H136, H138, and K219 together coordinate Ni(2+). N6-carboxylysine is present on K219. H221 lines the substrate pocket. Ni(2+) contacts are provided by H248 and H274. Catalysis depends on H322, which acts as the Proton donor. D362 lines the Ni(2+) pocket.

Belongs to the metallo-dependent hydrolases superfamily. Urease alpha subunit family. In terms of assembly, heterohexamer of 3 UreA (alpha) and 3 UreB (beta) subunits. Four heterohexamers assemble to form a 16 nm dodecameric complex. The cofactor is Ni cation. Carboxylation allows a single lysine to coordinate two nickel ions.

Its subcellular location is the cytoplasm. It catalyses the reaction urea + 2 H2O + H(+) = hydrogencarbonate + 2 NH4(+). It participates in nitrogen metabolism; urea degradation; CO(2) and NH(3) from urea (urease route): step 1/1. Its function is as follows. Ammonia produced by ureolysis increases the gastric pH thereby providing an environment permissive for colonization of the stomach. The polypeptide is Urease subunit beta (Helicobacter pylori (strain J99 / ATCC 700824) (Campylobacter pylori J99)).